The following is a 460-amino-acid chain: Anthocyanidin 3-O-glucoside 5-O-glucosyltransferase 1 (460 aa).

The signal sequence occupies residues 1–22 (MVRRRVLLATFPAQGHINPALQ). H16 acts as the Proton acceptor in catalysis. H16 is an an anthocyanidin binding site. The UDP-alpha-D-glucose site is built by Q338, H353, W356, N357, S358, E361, D377, and Q378.

The protein belongs to the UDP-glycosyltransferase family.

It catalyses the reaction an anthocyanidin 3-O-beta-D-glucoside + UDP-alpha-D-glucose = an anthocyanidin 3,5-di-O-beta-D-glucoside + UDP + 2 H(+). It participates in pigment biosynthesis; anthocyanin biosynthesis. Functionally, catalyzes the glucosylation at the O-5 position of anthocyanidin 3-glucosides to form anthocyanidin 3,5-di-O-glucosides using UDP-glucose as sugar donor. Anthocyanidin 3,5-di-O-glucosides are molecules that are responsible for pigmentation. Also acts on anthocyanidin 3-O-(6-O-malonylglucoside). Much less active with hydroxycinnamoylglucose derivatives. No activity in the absence of the 3-O-glucoside group. This is Anthocyanidin 3-O-glucoside 5-O-glucosyltransferase 1 (PF3R4) from Perilla frutescens (Beefsteak mint).